Here is a 640-residue protein sequence, read N- to C-terminus: Protection of telomeres protein 1 (640 aa).

The protein belongs to the telombin family. Homodimer or homooligomer. Component of the shelterin complex (telosome) composed of TERF1, TERF2, TINF2, TERF2IP, ACD and POT1. Binds single-stranded telomeric DNA as a monomer. Associated component of the telomerase holoenzyme complex. Found in a complex with TERF1, TINF2 and TNKS1. Interacts with TNKS1. Forms heterodimers with ACD. Identified in a complex with ACD and single-stranded telomeric DNA.

The protein localises to the nucleus. The protein resides in the chromosome. It localises to the telomere. Functionally, component of the telomerase ribonucleoprotein (RNP) complex that is essential for the replication of chromosome termini. Is a component of the double-stranded telomeric DNA-binding TRF1 complex which is involved in the regulation of telomere length by cis-inhibition of telomerase. Also acts as a single-stranded telomeric DNA-binding protein and thus may act as a downstream effector of the TRF1 complex and may transduce information about telomere maintenance and/or length to the telomere terminus. Component of the shelterin complex (telosome) that is involved in the regulation of telomere length and protection. Shelterin associates with arrays of double-stranded TTAGGG repeats added by telomerase and protects chromosome ends; without its protective activity, telomeres are no longer hidden from the DNA damage surveillance and chromosome ends are inappropriately processed by DNA repair pathways. Binds to two or more telomeric single-stranded 5'-TTAGGG-3' repeats (G-strand) and with high specificity to a minimal telomeric single-stranded 5'-TAGGGTTAG-3' sequence. Binds telomeric single-stranded sequences internally or at proximity of a 3'-end. Its activity is TERT dependent but it does not increase TERT activity. This is Protection of telomeres protein 1 (Pot1) from Mus musculus (Mouse).